The sequence spans 220 residues: Guanylate kinase (220 aa).

Positions 14-194 constitute a Guanylate kinase-like domain; sequence GLMVVISSPS…SYAAIKSIIN (181 aa). 21 to 28 is an ATP binding site; sequence SPSGAGKS.

It belongs to the guanylate kinase family.

The protein localises to the cytoplasm. It carries out the reaction GMP + ATP = GDP + ADP. Functionally, essential for recycling GMP and indirectly, cGMP. The protein is Guanylate kinase of Brucella abortus (strain 2308).